A 626-amino-acid chain; its full sequence is Chaperone protein HtpG (626 aa).

Residues 1-338 are a; substrate-binding; the sequence is MTANKNQKKT…SNDLPLNVSR (338 aa). The b stretch occupies residues 339–553; the sequence is EILQDHKLVY…SNEMSTQMAK (215 aa). Positions 554 to 626 are c; that stretch reads LFSAAGQTVP…ARINDLLINN (73 aa).

Belongs to the heat shock protein 90 family. In terms of assembly, homodimer.

The protein resides in the cytoplasm. Molecular chaperone. Has ATPase activity. This chain is Chaperone protein HtpG, found in Buchnera aphidicola subsp. Baizongia pistaciae (strain Bp).